Consider the following 771-residue polypeptide: Kojibiose phosphorylase (771 aa).

358 to 359 is a binding site for substrate; the sequence is WD. The active-site Proton donor is the glutamate 498. Substrate is bound at residue 611 to 612; the sequence is KQ.

Belongs to the glycosyl hydrolase 65 family.

The enzyme catalyses kojibiose + phosphate = beta-D-glucose 1-phosphate + D-glucose. In terms of biological role, catalyzes the reversible phosphorolysis of kojibiose into beta-D-glucose 1-phosphate (Glc1P) and D-glucose. In Caldanaerobacter subterraneus subsp. tengcongensis (strain DSM 15242 / JCM 11007 / NBRC 100824 / MB4) (Thermoanaerobacter tengcongensis), this protein is Kojibiose phosphorylase (kojP).